A 322-amino-acid polypeptide reads, in one-letter code: Thiamine thiazole synthase (322 aa).

Substrate-binding positions include C84, 105–106, G113, and V178; that span reads EA. Residue C211 is modified to 2,3-didehydroalanine (Cys). Substrate-binding positions include D213, H228, M280, and 290 to 292; that span reads RMG.

This sequence belongs to the THI4 family. Homooctamer. Fe cation is required as a cofactor. During the catalytic reaction, a sulfide is transferred from Cys-211 to a reaction intermediate, generating a dehydroalanine residue.

It is found in the cytoplasm. The protein resides in the nucleus. It carries out the reaction [ADP-thiazole synthase]-L-cysteine + glycine + NAD(+) = [ADP-thiazole synthase]-dehydroalanine + ADP-5-ethyl-4-methylthiazole-2-carboxylate + nicotinamide + 3 H2O + 2 H(+). In terms of biological role, involved in biosynthesis of the thiamine precursor thiazole. Catalyzes the conversion of NAD and glycine to adenosine diphosphate 5-(2-hydroxyethyl)-4-methylthiazole-2-carboxylic acid (ADT), an adenylated thiazole intermediate. The reaction includes an iron-dependent sulfide transfer from a conserved cysteine residue of the protein to a thiazole intermediate. The enzyme can only undergo a single turnover, which suggests it is a suicide enzyme. May have additional roles in adaptation to various stress conditions and in DNA damage tolerance. This is Thiamine thiazole synthase from Fusarium vanettenii (strain ATCC MYA-4622 / CBS 123669 / FGSC 9596 / NRRL 45880 / 77-13-4) (Fusarium solani subsp. pisi).